A 358-amino-acid chain; its full sequence is Alanine racemase (358 aa).

Lys-35 (proton acceptor; specific for D-alanine) is an active-site residue. An N6-(pyridoxal phosphate)lysine modification is found at Lys-35. Arg-130 provides a ligand contact to substrate. Tyr-255 acts as the Proton acceptor; specific for L-alanine in catalysis. Residue Met-303 coordinates substrate.

It belongs to the alanine racemase family. Pyridoxal 5'-phosphate serves as cofactor.

It carries out the reaction L-alanine = D-alanine. It participates in amino-acid biosynthesis; D-alanine biosynthesis; D-alanine from L-alanine: step 1/1. In terms of biological role, catalyzes the interconversion of L-alanine and D-alanine. May also act on other amino acids. This Shewanella woodyi (strain ATCC 51908 / MS32) protein is Alanine racemase (alr).